The chain runs to 682 residues: PWWP domain-containing DNA repair factor 3A (682 aa).

Phosphoserine is present on Ser105. The tract at residues 121–145 is disordered; that stretch reads EKTDADVASQVSSAPSPSLLGEDGQ. Positions 127-140 are enriched in low complexity; that stretch reads VASQVSSAPSPSLL. Ser168 is subject to Phosphoserine. 2 disordered regions span residues 179-318 and 334-369; these read GPKT…GAAP and GAGD…EEEP. Residues 203–220 are compositionally biased toward basic and acidic residues; it reads HGQESTTKKRQRNLGEKP. A phosphoserine mark is found at Ser345 and Ser346. The segment covering 346 to 357 has biased composition (polar residues); it reads SEESTGFKSTHS. In terms of domain architecture, PWWP spans 383 to 444; it reads VGMLVWLKYQ…KHFDCKEKHA (62 aa).

The protein belongs to the PWWP3A family. In terms of assembly, interacts with TP53BP1 (via BRCT domain); the interaction is not dependent on its phosphorylation status. Binds nucleosomes. Interacts with trimethylated 'Lys-36' of histone H3 (H3K36me3) (in vitro).

The protein localises to the nucleus. Involved in the DNA damage response pathway by contributing to the maintenance of chromatin architecture. Recruited to the vicinity of DNA breaks by TP53BP1 and plays an accessory role to facilitate damage-induced chromatin changes and promoting chromatin relaxation. Required for efficient DNA repair and cell survival following DNA damage. The chain is PWWP domain-containing DNA repair factor 3A (Pwwp3a) from Mus musculus (Mouse).